We begin with the raw amino-acid sequence, 76 residues long: Small ribosomal subunit protein eS17 (76 aa).

Belongs to the eukaryotic ribosomal protein eS17 family.

The protein is Small ribosomal subunit protein eS17 of Metallosphaera sedula (strain ATCC 51363 / DSM 5348 / JCM 9185 / NBRC 15509 / TH2).